The chain runs to 468 residues: Chitoporin (468 aa).

The first 32 residues, 1–32 (MRTFSGKRSTLALAIAGVTAMSGFMAMPEARA), serve as a signal peptide directing secretion.

The protein belongs to the outer membrane porin (Opr) (TC 1.B.25) family.

Its subcellular location is the cell outer membrane. Functionally, involved in the uptake of chitosugars. This Escherichia coli (strain K12) protein is Chitoporin (chiP).